The primary structure comprises 572 residues: Proline--tRNA ligase (572 aa).

This sequence belongs to the class-II aminoacyl-tRNA synthetase family. ProS type 1 subfamily. As to quaternary structure, homodimer.

Its subcellular location is the cytoplasm. It carries out the reaction tRNA(Pro) + L-proline + ATP = L-prolyl-tRNA(Pro) + AMP + diphosphate. In terms of biological role, catalyzes the attachment of proline to tRNA(Pro) in a two-step reaction: proline is first activated by ATP to form Pro-AMP and then transferred to the acceptor end of tRNA(Pro). As ProRS can inadvertently accommodate and process non-cognate amino acids such as alanine and cysteine, to avoid such errors it has two additional distinct editing activities against alanine. One activity is designated as 'pretransfer' editing and involves the tRNA(Pro)-independent hydrolysis of activated Ala-AMP. The other activity is designated 'posttransfer' editing and involves deacylation of mischarged Ala-tRNA(Pro). The misacylated Cys-tRNA(Pro) is not edited by ProRS. The polypeptide is Proline--tRNA ligase (Psychrobacter cryohalolentis (strain ATCC BAA-1226 / DSM 17306 / VKM B-2378 / K5)).